Reading from the N-terminus, the 276-residue chain is 2-dehydro-3-deoxyphosphooctonate aldolase (276 aa).

Belongs to the KdsA family.

The protein localises to the cytoplasm. The enzyme catalyses D-arabinose 5-phosphate + phosphoenolpyruvate + H2O = 3-deoxy-alpha-D-manno-2-octulosonate-8-phosphate + phosphate. Its pathway is carbohydrate biosynthesis; 3-deoxy-D-manno-octulosonate biosynthesis; 3-deoxy-D-manno-octulosonate from D-ribulose 5-phosphate: step 2/3. It participates in bacterial outer membrane biogenesis; lipopolysaccharide biosynthesis. The sequence is that of 2-dehydro-3-deoxyphosphooctonate aldolase from Helicobacter pylori (strain HPAG1).